The chain runs to 361 residues: SUN domain-containing protein 3 (361 aa).

The Nuclear portion of the chain corresponds to 1 to 47; it reads MSGKAKARRAAMFFRGCSEDASGSTSGSTLLSEDENPDTNGVTRSWK. Positions 19–38 are disordered; the sequence is EDASGSTSGSTLLSEDENPD. Positions 22 to 31 are enriched in low complexity; the sequence is SGSTSGSTLL. Residues 48–69 form a helical membrane-spanning segment; sequence IILSTMFTLTFLLVGLLSHQWL. Residues 70-361 are Perinuclear space-facing; that stretch reads KETEVPQKSR…RVHGTPGKHI (292 aa). A coiled-coil region spans residues 103–129; that stretch reads KEQLELLKKESQTLENNFHKILLLIEQ. The SUN domain maps to 197–358; the sequence is GASIIEAGTS…YRFRVHGTPG (162 aa).

Self-associates. Interacts with SYNE1 and SPAG4/SUN4. Proposed to form a spermatogenesis-specific LINC complex with SYNE1 during sperm head formation possibly implicating a SUN domain-based heterotrimer with SPAG4/SUN4 associating with SYNE1.

It localises to the membrane. Its subcellular location is the nucleus envelope. It is found in the nucleus inner membrane. As a probable component of the LINC (LInker of Nucleoskeleton and Cytoskeleton) complex, involved in the connection between the nuclear lamina and the cytoskeleton. The nucleocytoplasmic interactions established by the LINC complex play an important role in the transmission of mechanical forces across the nuclear envelope and in nuclear movement and positioning. May be involved in nuclear remodeling during sperm head formation in spermatogenesis. A probable SUN3:SYNE1 LINC complex may tether spermatid nuclei to posterior cytoskeletal structures such as the manchette. The sequence is that of SUN domain-containing protein 3 (SUN3) from Macaca fascicularis (Crab-eating macaque).